Here is a 286-residue protein sequence, read N- to C-terminus: Perivitellin-2 31 kDa subunit (286 aa).

The first 30 residues, 1 to 30 (MVKKIHFVMERHASIVAFLLAVLALTESQA), serve as a signal peptide directing secretion. N-linked (GlcNAc...) asparagine glycosylation occurs at Asn-101.

It belongs to the tectonin family. As to quaternary structure, perivitellin-2 is a dimer of heterodimers held together head-to-tail by non-covalent forces. The heterodimer is composed of the tachylectin subunit (31 kDa) and the MACPF subunit (67 kDa) that are disulfide-linked. PV2 is a very high density lipoprotein (VHDL). It contains 3.75% of lipids. The major lipid classes are free sterols and phospholipids and also have significant quantities of energy-providing triacylglycerides and free fatty acids. Produced by albumen secretory cells. Found in developing eggs.

The protein resides in the secreted. It is found in the target cell membrane. The egg defensive protein perivitellin-2 is a pore-forming two-subunit glycoprotein that affects both the nervous and digestive systems of mammals. In addition, it is a source of both structural and energetic molecules during embryonic development. The tachylectin subunit (31 kDa) binds target membranes while the MACPF subunit (67 kDa) disrupts lipid bilayers forming large pores (inner diameter of about 5.6 nm) altering the plasma membrance conductance. Both in vivo and in vitro, the protein shows wide pH range stability and is resistant to enzymatic proteolysis from gastrointestinal environments. It is cytotoxic to both epithelial and immune cells from the digestive system of mammals. It induces enterocyte death by a lytic mechanism and disrupts enterocyte monolayers in a dose-dependent manner. After oral administration to mice, it binds enterocytes and induces large dose-dependent morphological changes on their small intestine mucosa, reducing the absorptive surface. Additionally, it is detected in the Peyer's patches where it activates lymphoid follicles and triggers apoptosis. The toxin can also traverse the intestinal barrier and induce oral adaptive immunity with evidence of circulating antibody response. The toxin also shows hemagglutination properties thanks to the tachylectin subunit, but has no hemolytic activity. In addition to enterotoxin activity, the toxin also acts as a neurotoxin, since an intraperitoneal injection can induce paralysis of the mice rear limbs, followed by death. This Pomacea maculata (Giant applesnail) protein is Perivitellin-2 31 kDa subunit.